The primary structure comprises 594 residues: MEEYQKKIKEKLNVVPLEPGCYLMKDRNDQVIYVGKAKRLRNRLRSYFTGAHDAKTTRLVGEIRNFEFIVTSSETESLLLELNLIKQYQPRYNILLKDDKSYPFIKITKEKHPRLLVTRTVKKNSGKYFGPYPNAYSAQETKKLLDRIYPFRKCDNMPDKLCLYYHIGQCMGPCVYDVDLEKYAQMTKEITDFLNGEDKTILHHLEDRMNKASEQLDFEQAKEYRDMIQHIHNLTKKQKIMSSDNTIRDVFGYSVSKGWMCVQVFFVRQGNMIKRDATMIPLQQTEEEEFYTFIGQFYSLNQHLLPKEVHVPKNLDKDIIQSVVDTKIVQPVRGAKKDMINLANHNAEVQLDNKFELIARDESRTIKAIEELGERMGIQTPIRIEAFDNSNIQGVDPVSAMVTFVDGKPHKKDYRKYKIKTVEGPDDYKSMREVVRRRYTRVLNEGLPLPDLIIVDGGKGHMNGVMDVLENELGLDIPVAGLQKNDKHQTSELLYGASAEIVPLKKNSQAFYLLHRIQDEVHRFAITFHRQTRQKTGLKSVLDDIDGIGTKRKTSLLRTFGSIKKMKEASFDELRQAGLPEKVAKNLQNALQNK.

In terms of domain architecture, GIY-YIG spans 17–94; that stretch reads LEPGCYLMKD…IKQYQPRYNI (78 aa). One can recognise a UVR domain in the interval 199–234; the sequence is KTILHHLEDRMNKASEQLDFEQAKEYRDMIQHIHNL.

This sequence belongs to the UvrC family. Interacts with UvrB in an incision complex.

The protein localises to the cytoplasm. Functionally, the UvrABC repair system catalyzes the recognition and processing of DNA lesions. UvrC both incises the 5' and 3' sides of the lesion. The N-terminal half is responsible for the 3' incision and the C-terminal half is responsible for the 5' incision. This is UvrABC system protein C from Staphylococcus epidermidis (strain ATCC 12228 / FDA PCI 1200).